The sequence spans 97 residues: Co-chaperonin GroES (97 aa).

This sequence belongs to the GroES chaperonin family. As to quaternary structure, heptamer of 7 subunits arranged in a ring. Interacts with the chaperonin GroEL.

Its subcellular location is the cytoplasm. Its function is as follows. Together with the chaperonin GroEL, plays an essential role in assisting protein folding. The GroEL-GroES system forms a nano-cage that allows encapsulation of the non-native substrate proteins and provides a physical environment optimized to promote and accelerate protein folding. GroES binds to the apical surface of the GroEL ring, thereby capping the opening of the GroEL channel. This Serratia proteamaculans (strain 568) protein is Co-chaperonin GroES.